A 135-amino-acid chain; its full sequence is Retinol-binding protein 1 (135 aa).

Residues 22 to 32 (RALDVNVALRK) form an important for interaction with STRA6 region. Residues Lys41, Met63, and Gln109 each coordinate all-trans-retinol.

The protein belongs to the calycin superfamily. Fatty-acid binding protein (FABP) family. In terms of assembly, interacts (only as retinol-free apoprotein) with STRA6.

The protein resides in the cytoplasm. The protein localises to the lipid droplet. Functionally, cytoplasmic retinol-binding protein. Accepts retinol from the transport protein STRA6, and thereby contributes to retinol uptake, storage and retinoid homeostasis. This Rattus norvegicus (Rat) protein is Retinol-binding protein 1 (Rbp1).